The primary structure comprises 155 residues: Microsomal glutathione S-transferase 1 (155 aa).

The Lumenal portion of the chain corresponds to 3–9 (DLKQLMD). Residues 10–33 (NEVLMAFTSYATIILAKMMFLSSA) form a helical membrane-spanning segment. Over 34–62 (TAFQRLTNKVFANPEDCAGFGKGENAKKF) the chain is Cytoplasmic. Glutathione is bound at residue R38. 3 positions are modified to N6-acetyllysine: K42, K55, and K60. The helical transmembrane segment at 63–96 (LRTDEKVERVRRAHLNDLENIVPFLGIGLLYSLS) threads the bilayer. Residues R73, R74, H76, and E81 each coordinate glutathione. Y93 bears the 3'-nitrotyrosine; in vitro mark. Over 97-99 (GPD) the chain is Lumenal. Residues 100-123 (LSTALIHFRIFVGARIYHTIAYLT) form a helical membrane-spanning segment. Residue Y121 participates in glutathione binding. Residues 124–128 (PLPQP) lie on the Cytoplasmic side of the membrane. A helical transmembrane segment spans residues 129 to 148 (NRGLAFFVGYGVTLSMAYRL). Topologically, residues 149–155 (LRSRLYL) are lumenal.

Belongs to the MAPEG family. In terms of assembly, homotrimer; The trimer binds only one molecule of glutathione. In vitro, peroxynitrite induces nitration at Tyr-93 which activates the enzyme. In terms of tissue distribution, highest in the liver, followed by kidney and testis and much lower in seminal vesicles, spleen, lung and brain.

The protein localises to the endoplasmic reticulum membrane. It localises to the mitochondrion outer membrane. The enzyme catalyses RX + glutathione = an S-substituted glutathione + a halide anion + H(+). With respect to regulation, in vitro, can be activated by reagents that attack Cys-50 sulfhydryl, such as N-ethylmaleimide and via nitration of Tyr-93 by peroxynitrite. Functionally, conjugation of reduced glutathione to a wide number of exogenous and endogenous hydrophobic electrophiles. This is Microsomal glutathione S-transferase 1 (Mgst1) from Rattus norvegicus (Rat).